A 1078-amino-acid polypeptide reads, in one-letter code: Isoleucine--tRNA ligase (1078 aa).

A 'HIGH' region motif is present at residues 52–62; it reads PTANGKPALHH. The 'KMSKS' region signature appears at 637–641; sequence KMSKS. Lys640 lines the ATP pocket.

This sequence belongs to the class-I aminoacyl-tRNA synthetase family. IleS type 2 subfamily. As to quaternary structure, monomer. Requires Zn(2+) as cofactor.

Its subcellular location is the cytoplasm. The enzyme catalyses tRNA(Ile) + L-isoleucine + ATP = L-isoleucyl-tRNA(Ile) + AMP + diphosphate. Its function is as follows. Catalyzes the attachment of isoleucine to tRNA(Ile). As IleRS can inadvertently accommodate and process structurally similar amino acids such as valine, to avoid such errors it has two additional distinct tRNA(Ile)-dependent editing activities. One activity is designated as 'pretransfer' editing and involves the hydrolysis of activated Val-AMP. The other activity is designated 'posttransfer' editing and involves deacylation of mischarged Val-tRNA(Ile). The chain is Isoleucine--tRNA ligase from Deinococcus radiodurans (strain ATCC 13939 / DSM 20539 / JCM 16871 / CCUG 27074 / LMG 4051 / NBRC 15346 / NCIMB 9279 / VKM B-1422 / R1).